A 181-amino-acid polypeptide reads, in one-letter code: CASP-like protein 1F1 (181 aa).

At 1–18 the chain is on the cytoplasmic side; it reads MPNNEAKFSVNQPLKTQK. A helical membrane pass occupies residues 19–39; it reads LFIGVQIFFRIVAIAASVASS. At 40-70 the chain is on the extracellular side; it reads WLMITSKQVIDIGGIVLDARYSYSPEFKFLA. Residues 71-91 form a helical membrane-spanning segment; the sequence is FTNIVVGCFSLLSLLFLVLVV. Topologically, residues 92–100 are cytoplasmic; the sequence is RQGSNPNHY. The helical transmembrane segment at 101–121 threads the bilayer; sequence FFLFLHDLAMMSLVVGGCAAA. Topologically, residues 122–152 are extracellular; it reads TTVGFLGKHGNSHTGWMQICDNFGKFCNRAQ. Residues 153-173 traverse the membrane as a helical segment; that stretch reads TSVTISYLNLICLSILTITSA. The Cytoplasmic segment spans residues 174-181; that stretch reads SKSRKMEA.

It belongs to the Casparian strip membrane proteins (CASP) family. In terms of assembly, homodimer and heterodimers.

The protein localises to the cell membrane. This is CASP-like protein 1F1 from Populus trichocarpa (Western balsam poplar).